The chain runs to 33 residues: MSDIN-like toxin proprotein 6 (33 aa).

Positions 1-10 (MSDINATRLP) are excised as a propeptide. A cross-link (cyclopeptide (Leu-Pro)) is located at residues 11–20 (LILLAALGIP). A propeptide spanning residues 21-33 (SDDADSTLTRGER) is cleaved from the precursor.

Belongs to the MSDIN fungal toxin family. Post-translationally, processed by the macrocyclase-peptidase enzyme POPB to yield a toxic cyclic decapeptide. POPB first removes 10 residues from the N-terminus. Conformational trapping of the remaining peptide forces the enzyme to release this intermediate rather than proceed to macrocyclization. The enzyme rebinds the remaining peptide in a different conformation and catalyzes macrocyclization of the N-terminal 10 residues.

In terms of biological role, probable toxin that belongs to the MSDIN-like toxin family responsible for a large number of food poisoning cases and deaths. The polypeptide is MSDIN-like toxin proprotein 6 (Amanita phalloides (Death cap)).